The sequence spans 264 residues: MGKLQDWSITTCLFLFFLHASQTHCTSQSHVRNRLYRSKRGIGSSIDTSHLNAIRRLSVSLSLQNISGVNQQEQKERDLIENLPGQPSVNFKQYGGYVTVNESAGRSLYYYFVEATNTKNSSPLVLWLNGGPGCSSLYGAFQELGPFRVHSDNKTLYTNPYSWNNVANMLFLESPAGTGFSYTNTTTDMENPGDMKTAADNYVFLVKWLERFPEYKGRDFYIAGESYAGHYVQWRHGCGDFGDSYNVRTEDDESNGCYGMASVV.

A signal peptide spans 1-23 (MGKLQDWSITTCLFLFFLHASQT). N65, N101, N153, and N184 each carry an N-linked (GlcNAc...) asparagine glycan.

This sequence belongs to the peptidase S10 family.

It localises to the secreted. In Arabidopsis thaliana (Mouse-ear cress), this protein is Putative serine carboxypeptidase-like 53 (SCPL53).